A 272-amino-acid polypeptide reads, in one-letter code: Glutamate racemase (272 aa).

Substrate-binding positions include 10–11 (DS) and 42–43 (YG). Cys74 acts as the Proton donor/acceptor in catalysis. Residue 75 to 76 (NT) participates in substrate binding. Cys185 functions as the Proton donor/acceptor in the catalytic mechanism. 186 to 187 (TH) is a binding site for substrate.

It belongs to the aspartate/glutamate racemases family.

It carries out the reaction L-glutamate = D-glutamate. Its pathway is cell wall biogenesis; peptidoglycan biosynthesis. Functionally, provides the (R)-glutamate required for cell wall biosynthesis. The polypeptide is Glutamate racemase (Bacillus velezensis (strain DSM 23117 / BGSC 10A6 / LMG 26770 / FZB42) (Bacillus amyloliquefaciens subsp. plantarum)).